A 101-amino-acid polypeptide reads, in one-letter code: RNA-binding protein Hfq (101 aa).

The Sm domain maps to 9–68; it reads DPYLNALRRERIPVSIYLVNGIKLQGQIESFDQFIILLKNTVSQMVYKHAISTVVPARSI. Residues 68 to 91 form a disordered region; that stretch reads ISHNNNGSSQAQAPQQAVQTTQPV. Over residues 77–91 the composition is skewed to low complexity; sequence QAQAPQQAVQTTQPV.

This sequence belongs to the Hfq family. In terms of assembly, homohexamer.

Its function is as follows. RNA chaperone that binds small regulatory RNA (sRNAs) and mRNAs to facilitate mRNA translational regulation in response to envelope stress, environmental stress and changes in metabolite concentrations. Also binds with high specificity to tRNAs. The sequence is that of RNA-binding protein Hfq from Haemophilus ducreyi (strain 35000HP / ATCC 700724).